Reading from the N-terminus, the 337-residue chain is MVNVGINGFGRIGRLVLRNALQMQILTVVAVNDPFLDVEYMAYLFKYDSVHGRYQGKVETKDGKLIIDGHKIAAFAEREPANIKWADCGAEYIVESTGVFKTEELAKEHLKGGAKKVVITAPGSGVPTYVVGVNLDKYDPKEVVISNASCTTNCLAVLAKVINDKFGIVEGLMTTVHATTATQKTVDAPAKKDWRSGRSVTNNIIPASTGAAKAVTKAIPDLEGKLTGLAFRVPTLDVSVVDLVVRLEKETSYDDVKKAMRDAADGKHPGIEKGIVDYTEEDVVSTDFVGSNYSMIFDAKAGIALNSRFMKLVAWYDNEWGYARRVCDEVVYVAKKN.

NAD(+) is bound by residues 11 to 12 (RI), Asp33, and Arg78. D-glyceraldehyde 3-phosphate-binding positions include 149–151 (SCT), Thr180, 209–210 (TG), and Arg232. The Nucleophile role is filled by Cys150. Asn318 is a binding site for NAD(+).

The protein belongs to the glyceraldehyde-3-phosphate dehydrogenase family. In terms of assembly, homotetramer.

The protein resides in the cytoplasm. The catalysed reaction is D-glyceraldehyde 3-phosphate + phosphate + NAD(+) = (2R)-3-phospho-glyceroyl phosphate + NADH + H(+). Its pathway is carbohydrate degradation; glycolysis; pyruvate from D-glyceraldehyde 3-phosphate: step 1/5. The polypeptide is Glyceraldehyde-3-phosphate dehydrogenase 1 (gpd1) (Agaricus bisporus (White button mushroom)).